The primary structure comprises 277 residues: Putative phosphoenolpyruvate synthase regulatory protein (277 aa).

157 to 164 provides a ligand contact to ADP; sequence GVSRCGKT.

Belongs to the pyruvate, phosphate/water dikinase regulatory protein family. PSRP subfamily.

It carries out the reaction [pyruvate, water dikinase] + ADP = [pyruvate, water dikinase]-phosphate + AMP + H(+). The enzyme catalyses [pyruvate, water dikinase]-phosphate + phosphate + H(+) = [pyruvate, water dikinase] + diphosphate. In terms of biological role, bifunctional serine/threonine kinase and phosphorylase involved in the regulation of the phosphoenolpyruvate synthase (PEPS) by catalyzing its phosphorylation/dephosphorylation. In Klebsiella pneumoniae subsp. pneumoniae (strain ATCC 700721 / MGH 78578), this protein is Putative phosphoenolpyruvate synthase regulatory protein.